Consider the following 136-residue polypeptide: Piercer of microtubule wall 1 protein (136 aa).

Residues 1-16 (MSEEDPKACAEPEEPK) show a composition bias toward basic and acidic residues. The segment at 1–27 (MSEEDPKACAEPEEPKAGPPPEKTSDW) is disordered.

Belongs to the PIERCE1 family. Microtubule inner protein component of sperm flagellar doublet microtubules. Interacts with CFAP53, ODAD1 and ODAD3; the interactions link the outer dynein arms docking complex (ODA-DC) to the internal microtubule inner proteins (MIP) in cilium axoneme. As to expression, expressed in trachea multiciliated cells.

The protein localises to the cytoplasm. It is found in the cytoskeleton. The protein resides in the cilium axoneme. Its subcellular location is the flagellum axoneme. Microtubule inner protein involved in the attachment of outer dynein arms (ODAs) to dynein-decorated doublet microtubules (DMTs) in cilia axoneme, which is required for motile cilia beating. Functions at the initial step of left-right asymmetry specification of the visceral organs. The chain is Piercer of microtubule wall 1 protein (PIERCE1) from Bos taurus (Bovine).